The sequence spans 262 residues: Acyl-[acyl-carrier-protein]--UDP-N-acetylglucosamine O-acyltransferase (262 aa).

Belongs to the transferase hexapeptide repeat family. LpxA subfamily. As to quaternary structure, homotrimer.

It is found in the cytoplasm. It catalyses the reaction a (3R)-hydroxyacyl-[ACP] + UDP-N-acetyl-alpha-D-glucosamine = a UDP-3-O-[(3R)-3-hydroxyacyl]-N-acetyl-alpha-D-glucosamine + holo-[ACP]. The protein operates within glycolipid biosynthesis; lipid IV(A) biosynthesis; lipid IV(A) from (3R)-3-hydroxytetradecanoyl-[acyl-carrier-protein] and UDP-N-acetyl-alpha-D-glucosamine: step 1/6. Involved in the biosynthesis of lipid A, a phosphorylated glycolipid that anchors the lipopolysaccharide to the outer membrane of the cell. The chain is Acyl-[acyl-carrier-protein]--UDP-N-acetylglucosamine O-acyltransferase from Janthinobacterium sp. (strain Marseille) (Minibacterium massiliensis).